Reading from the N-terminus, the 318-residue chain is Ethylene-responsive transcription factor FZP (318 aa).

A compositionally biased stretch (low complexity) spans 1-15 (MNTRGSGSSSSSSSS). 2 disordered regions span residues 1-59 (MNTR…GRFL) and 158-178 (SYGHHHHHHHHHGHGAASGAS). Over residues 25–37 (PPKPASQPSPPSS) the composition is skewed to pro residues. The AP2/ERF DNA-binding region spans 57–114 (RFLGVRRRPWGRYAAEIRDPTTKERHWLGTFDTAQEAALAYDRAALSMKGAQARTNFV). Residues 160-171 (GHHHHHHHHHGH) are compositionally biased toward basic residues.

Belongs to the AP2/ERF transcription factor family. ERF subfamily.

The protein resides in the nucleus. Required to prevent the formation of axillary meristems within the spikelet meristem and permit the subsequent establishment of floral meristem identity. Mediates the transition from spikelet to floret meristem. Determines the transition from panicle branching to spikelet formation. May specify floral organ identity by regulating the class B genes (Agamous-like genes) MADS6 and MADS17, as well as class E genes MADS1, MADS7 and MADS8 in floral meristem. Possesses transactivation activity. This is Ethylene-responsive transcription factor FZP from Oryza sativa subsp. japonica (Rice).